A 204-amino-acid chain; its full sequence is NADH-ubiquinone oxidoreductase subunit 9 (204 aa).

This sequence belongs to the complex I 30 kDa subunit family. Complex I is composed of about 30 different subunits.

The protein localises to the mitochondrion inner membrane. The enzyme catalyses a ubiquinone + NADH + 5 H(+)(in) = a ubiquinol + NAD(+) + 4 H(+)(out). In terms of biological role, core subunit of the mitochondrial membrane respiratory chain NADH dehydrogenase (Complex I) that is believed to belong to the minimal assembly required for catalysis. Complex I functions in the transfer of electrons from NADH to the respiratory chain. The immediate electron acceptor for the enzyme is believed to be ubiquinone. In Reclinomonas americana, this protein is NADH-ubiquinone oxidoreductase subunit 9 (NAD9).